The chain runs to 174 residues: DNA replication inhibitor plutonium (174 aa).

ANK repeat units follow at residues 39-68 (YGNT…NIFA) and 72-103 (FGQN…DFNL). Threonine 167 bears the Phosphothreonine mark.

Functionally, inhibits DNA replication early in developments. May bind and block the action of a replication or initiation factor. The protein is DNA replication inhibitor plutonium (plu) of Drosophila melanogaster (Fruit fly).